The chain runs to 288 residues: Phosphatidylserine decarboxylase proenzyme (288 aa).

Residues Asp89, His146, and Ser252 each act as charge relay system; for autoendoproteolytic cleavage activity in the active site. Residue Ser252 is the Schiff-base intermediate with substrate; via pyruvic acid; for decarboxylase activity of the active site. Ser252 bears the Pyruvic acid (Ser); by autocatalysis mark.

This sequence belongs to the phosphatidylserine decarboxylase family. PSD-B subfamily. Prokaryotic type I sub-subfamily. In terms of assembly, heterodimer of a large membrane-associated beta subunit and a small pyruvoyl-containing alpha subunit. Requires pyruvate as cofactor. Is synthesized initially as an inactive proenzyme. Formation of the active enzyme involves a self-maturation process in which the active site pyruvoyl group is generated from an internal serine residue via an autocatalytic post-translational modification. Two non-identical subunits are generated from the proenzyme in this reaction, and the pyruvate is formed at the N-terminus of the alpha chain, which is derived from the carboxyl end of the proenzyme. The autoendoproteolytic cleavage occurs by a canonical serine protease mechanism, in which the side chain hydroxyl group of the serine supplies its oxygen atom to form the C-terminus of the beta chain, while the remainder of the serine residue undergoes an oxidative deamination to produce ammonia and the pyruvoyl prosthetic group on the alpha chain. During this reaction, the Ser that is part of the protease active site of the proenzyme becomes the pyruvoyl prosthetic group, which constitutes an essential element of the active site of the mature decarboxylase.

Its subcellular location is the cell membrane. The catalysed reaction is a 1,2-diacyl-sn-glycero-3-phospho-L-serine + H(+) = a 1,2-diacyl-sn-glycero-3-phosphoethanolamine + CO2. Its pathway is phospholipid metabolism; phosphatidylethanolamine biosynthesis; phosphatidylethanolamine from CDP-diacylglycerol: step 2/2. Catalyzes the formation of phosphatidylethanolamine (PtdEtn) from phosphatidylserine (PtdSer). The chain is Phosphatidylserine decarboxylase proenzyme from Shewanella frigidimarina (strain NCIMB 400).